Here is a 186-residue protein sequence, read N- to C-terminus: TCHDDDNLVLPEVYDQDGNPLRIGERYIIKNPLLGAGAVYLDNIGNLQCPNAVLQHMSIPQFLGKGTPVVFIRKSESDYGDVVRLMTAVYIKFFVKTTKLCVDETVWKVNNEQLVVTGGNVGNENDIFKIKKTDLVIRGMKNVYKLLHCPSHLECKNIGSNFKNGYPRLVTVNDEKDFIPFVFIKA.

An N-terminal signal peptide occupies residues 1 to 7 (TCHDDDN). 2 disulfide bridges follow: Cys-49–Cys-101 and Cys-149–Cys-155.

Belongs to the protease inhibitor I3 (leguminous Kunitz-type inhibitor) family.

The protein localises to the vacuole. In terms of biological role, probable inhibitor of cysteine proteases. May protect the plant by inhibiting proteases of invading organisms. This chain is Cysteine protease inhibitor 10, found in Solanum tuberosum (Potato).